The chain runs to 466 residues: Heat stress transcription factor A-5 (466 aa).

Residues 21–115 (PAPFLVKTYE…LLKNIHRRKP (95 aa)) mediate DNA binding. Residues 125 to 191 (SSTDQERAVL…KLLNFLETAI (67 aa)) form a hydrophobic repeat HR-A/B region. Residues 198-217 (KNFGKKVEQLDISAYNKKRR) carry the Bipartite nuclear localization signal motif. Disordered regions lie at residues 215-248 (KRRLPEVEQSKPPSEDSHLDNSSGSSRRESGNIF), 272-300 (HSIQSSNEEGASPKGILSGGDPNTTLTKR), and 422-466 (TERP…QLTL). Positions 218–233 (LPEVEQSKPPSEDSHL) are enriched in basic and acidic residues. Residues 414 to 423 (DVFWEQFLTE) carry the AHA motif. Polar residues-rich tracts occupy residues 425 to 438 (PGSSDNEEASSTYR) and 455 to 466 (LRNTKNIEQLTL). A Nuclear export signal motif is present at residues 461–466 (IEQLTL).

The protein belongs to the HSF family. Class A subfamily. Homotrimer. Post-translationally, exhibits temperature-dependent phosphorylation.

The protein localises to the cytoplasm. Its subcellular location is the nucleus. In terms of biological role, transcriptional activator that specifically binds DNA sequence 5'-AGAAnnTTCT-3' known as heat shock promoter elements (HSE). This Arabidopsis thaliana (Mouse-ear cress) protein is Heat stress transcription factor A-5 (HSFA5).